The sequence spans 413 residues: MGLEEQGRAREDTPLLGKGRPLSSKFKTFANVFIAIVGAGVLGLPYAFKRTGWLMGLLTLFSVAALINHCMMLLVHIRRKLGVSNIGSFGDLGFAACGNLGRFVVDILIILSQAGFCVGYLIFIGNTLANLSKPTKSTTLMSLRHLMGVSPKSLYIWGCFPFQLGLNSIKTLTHLAPLSIFADVVDLGAMAVVIVEDIKITVVQRPQVVAFGGMSVFFYGMGVAVYAFEGVGMVLPLESETKDKDKFGKVLALSMLFIAVMYGSFGVLGYMAFGDDTMDIITANLGAGVVSSLVQLGLCINLFFTFPLMMNPVFEIVERRFWSGMYCVWLRWLLVLAVTLVALLVPNFADFLSLVGSSVCCALGFVLPSLFHLMVFKDEMEWKQRALDVGILLLGVILGVSGTWSSLTEIFQE.

At 1–27 (MGLEEQGRAREDTPLLGKGRPLSSKFK) the chain is on the cytoplasmic side. A helical membrane pass occupies residues 28–48 (TFANVFIAIVGAGVLGLPYAF). Residues 49 to 54 (KRTGWL) lie on the Vacuolar side of the membrane. The chain crosses the membrane as a helical span at residues 55 to 75 (MGLLTLFSVAALINHCMMLLV). The Cytoplasmic segment spans residues 76 to 103 (HIRRKLGVSNIGSFGDLGFAACGNLGRF). The helical transmembrane segment at 104–124 (VVDILIILSQAGFCVGYLIFI) threads the bilayer. Residues 125-145 (GNTLANLSKPTKSTTLMSLRH) are Vacuolar-facing. The chain crosses the membrane as a helical span at residues 146–166 (LMGVSPKSLYIWGCFPFQLGL). At 167 to 174 (NSIKTLTH) the chain is on the cytoplasmic side. A helical transmembrane segment spans residues 175–195 (LAPLSIFADVVDLGAMAVVIV). The Vacuolar portion of the chain corresponds to 196–207 (EDIKITVVQRPQ). Residues 208–228 (VVAFGGMSVFFYGMGVAVYAF) traverse the membrane as a helical segment. Over 229–249 (EGVGMVLPLESETKDKDKFGK) the chain is Cytoplasmic. A helical transmembrane segment spans residues 250–270 (VLALSMLFIAVMYGSFGVLGY). The Vacuolar portion of the chain corresponds to 271 to 288 (MAFGDDTMDIITANLGAG). A helical membrane pass occupies residues 289–309 (VVSSLVQLGLCINLFFTFPLM). The Cytoplasmic portion of the chain corresponds to 310–331 (MNPVFEIVERRFWSGMYCVWLR). A helical membrane pass occupies residues 332-352 (WLLVLAVTLVALLVPNFADFL). Residues 353 to 355 (SLV) lie on the Vacuolar side of the membrane. A helical membrane pass occupies residues 356–376 (GSSVCCALGFVLPSLFHLMVF). Topologically, residues 377–390 (KDEMEWKQRALDVG) are cytoplasmic. Residues 391 to 411 (ILLLGVILGVSGTWSSLTEIF) form a helical membrane-spanning segment. At 412–413 (QE) the chain is on the vacuolar side.

This sequence belongs to the amino acid/polyamine transporter 2 family. Amino acid/auxin permease (AAAP) (TC 2.A.18.8) subfamily. As to expression, ubiquitous.

The protein localises to the vacuole membrane. In terms of biological role, translocates preferentially neutral amino acids from the vacuole to the cytoplasm. This chain is Amino acid transporter AVT3B, found in Arabidopsis thaliana (Mouse-ear cress).